Reading from the N-terminus, the 149-residue chain is YbbR-like domain-containing protein in def 5'region (149 aa).

In terms of domain architecture, YbbR-like spans 1 to 68 (IPVEVLAQGA…LRPNRVRVVE (68 aa)).

The protein is YbbR-like domain-containing protein in def 5'region of Thermus thermophilus.